We begin with the raw amino-acid sequence, 89 residues long: Small ribosomal subunit protein uS15 (89 aa).

It belongs to the universal ribosomal protein uS15 family. As to quaternary structure, part of the 30S ribosomal subunit. Forms a bridge to the 50S subunit in the 70S ribosome, contacting the 23S rRNA.

Functionally, one of the primary rRNA binding proteins, it binds directly to 16S rRNA where it helps nucleate assembly of the platform of the 30S subunit by binding and bridging several RNA helices of the 16S rRNA. In terms of biological role, forms an intersubunit bridge (bridge B4) with the 23S rRNA of the 50S subunit in the ribosome. This chain is Small ribosomal subunit protein uS15, found in Arthrobacter sp. (strain FB24).